The following is a 136-amino-acid chain: Small ribosomal subunit protein bS6 (136 aa).

Residues 117 to 130 (EERSRSSRRQREDV) show a composition bias toward basic and acidic residues. Residues 117 to 136 (EERSRSSRRQREDVIEGVEL) are disordered.

It belongs to the bacterial ribosomal protein bS6 family.

Functionally, binds together with bS18 to 16S ribosomal RNA. In Bartonella quintana (strain Toulouse) (Rochalimaea quintana), this protein is Small ribosomal subunit protein bS6.